The chain runs to 172 residues: Disulfide bond formation protein B (172 aa).

At 1-16 the chain is on the cytoplasmic side; it reads MNLFASLNQFSKNRIS. Residues 17–33 traverse the membrane as a helical segment; that stretch reads WLLLLLFVVFFEGAALF. Topologically, residues 34–51 are periplasmic; that stretch reads FQHVMMLSPCVMCIYERV. An intrachain disulfide couples Cys-43 to Cys-46. Residues 52-67 traverse the membrane as a helical segment; sequence AMLGVGGAALFGLIAP. Topologically, residues 68-74 are cytoplasmic; sequence NNPLVRW. A helical membrane pass occupies residues 75–92; sequence LGLAAWGASAYKGLALSL. The Periplasmic portion of the chain corresponds to 93 to 147; the sequence is QHVDYQFNPSPFATCDLFVTFPDWAPLNQWAPWMFEAYGDCSKIVWQFMTLSMPQ. Residues Cys-107 and Cys-133 are joined by a disulfide bond. Residues 148 to 166 traverse the membrane as a helical segment; the sequence is WLVIIFAGNLVALAFIVIA. Topologically, residues 167-172 are cytoplasmic; it reads QFFKSK.

The protein belongs to the DsbB family.

The protein resides in the cell inner membrane. Its function is as follows. Required for disulfide bond formation in some periplasmic proteins. Acts by oxidizing the DsbA protein. This is Disulfide bond formation protein B from Vibrio vulnificus (strain CMCP6).